The chain runs to 474 residues: Glycogen synthase (474 aa).

ADP-alpha-D-glucose is bound at residue K15.

Belongs to the glycosyltransferase 1 family. Bacterial/plant glycogen synthase subfamily.

It catalyses the reaction [(1-&gt;4)-alpha-D-glucosyl](n) + ADP-alpha-D-glucose = [(1-&gt;4)-alpha-D-glucosyl](n+1) + ADP + H(+). Its pathway is glycan biosynthesis; glycogen biosynthesis. In terms of biological role, synthesizes alpha-1,4-glucan chains using ADP-glucose. This is Glycogen synthase from Finegoldia magna (strain ATCC 29328 / DSM 20472 / WAL 2508) (Peptostreptococcus magnus).